The chain runs to 199 residues: Thymidine kinase (199 aa).

ATP is bound by residues 9-16 (GAMSSGKS) and 93-96 (DEAQ). Catalysis depends on Glu-94, which acts as the Proton acceptor. Residues Cys-151, Cys-154, Cys-188, and His-191 each coordinate Zn(2+).

Belongs to the thymidine kinase family. As to quaternary structure, homotetramer.

It is found in the cytoplasm. It carries out the reaction thymidine + ATP = dTMP + ADP + H(+). This is Thymidine kinase from Lactobacillus johnsonii (strain CNCM I-12250 / La1 / NCC 533).